The following is a 209-amino-acid chain: Holliday junction branch migration complex subunit RuvA (209 aa).

The domain I stretch occupies residues 1-70 (MINYLKGKTT…EDQQILYGFS (70 aa)). Residues 71-149 (TDSERDLFRQ…QWEQAIALKT (79 aa)) form a domain II region. Residues 150 to 160 (PVSVGVPSREI) form a flexible linker region. Residues 160-209 (ILEEVEMTLLALGYTDEEIDQAISAISQDNLLLKNPHVEEWLKSAIAWLS) form a domain III region.

Belongs to the RuvA family. In terms of assembly, homotetramer. Forms an RuvA(8)-RuvB(12)-Holliday junction (HJ) complex. HJ DNA is sandwiched between 2 RuvA tetramers; dsDNA enters through RuvA and exits via RuvB. An RuvB hexamer assembles on each DNA strand where it exits the tetramer. Each RuvB hexamer is contacted by two RuvA subunits (via domain III) on 2 adjacent RuvB subunits; this complex drives branch migration. In the full resolvosome a probable DNA-RuvA(4)-RuvB(12)-RuvC(2) complex forms which resolves the HJ.

The protein resides in the cytoplasm. Its function is as follows. The RuvA-RuvB-RuvC complex processes Holliday junction (HJ) DNA during genetic recombination and DNA repair, while the RuvA-RuvB complex plays an important role in the rescue of blocked DNA replication forks via replication fork reversal (RFR). RuvA specifically binds to HJ cruciform DNA, conferring on it an open structure. The RuvB hexamer acts as an ATP-dependent pump, pulling dsDNA into and through the RuvAB complex. HJ branch migration allows RuvC to scan DNA until it finds its consensus sequence, where it cleaves and resolves the cruciform DNA. The protein is Holliday junction branch migration complex subunit RuvA of Gloeothece citriformis (strain PCC 7424) (Cyanothece sp. (strain PCC 7424)).